A 217-amino-acid polypeptide reads, in one-letter code: MNQSLLAPFGTAIERVEAGLNALRQGQGVLVVDDEDRENEGDLIFAAQTLTNTQMAMLIRECSGIVCLCLPDEKVKALELPPMVENNSSQYGTAFTVSIEAKVGVTTGVSAADRVTTIKAAIADGAKPSDLARPGHVYPLRAQPGGVLTRRGHTEGTIDLMQLAGLKPAGVLCEVTNPDGTMARLPEIIAFGAQHNIPVLTIEDIVLYRKSLLANVG.

D-ribulose 5-phosphate-binding positions include 37–38 (RE), D42, 150–154 (RRGHT), and E174. Residue E38 coordinates Mg(2+). A Mg(2+)-binding site is contributed by H153.

The protein belongs to the DHBP synthase family. As to quaternary structure, homodimer. Mg(2+) is required as a cofactor. The cofactor is Mn(2+).

It carries out the reaction D-ribulose 5-phosphate = (2S)-2-hydroxy-3-oxobutyl phosphate + formate + H(+). The protein operates within cofactor biosynthesis; riboflavin biosynthesis; 2-hydroxy-3-oxobutyl phosphate from D-ribulose 5-phosphate: step 1/1. Its function is as follows. Catalyzes the conversion of D-ribulose 5-phosphate to formate and 3,4-dihydroxy-2-butanone 4-phosphate. The protein is 3,4-dihydroxy-2-butanone 4-phosphate synthase of Shewanella putrefaciens (strain CN-32 / ATCC BAA-453).